Consider the following 403-residue polypeptide: MRSWSAPKVPKLPGSGLPLRLYDTATREVRETEPSGKARMYVCGITPYDATHLGHANTYLAFDLVNRAWRDAGHDVHYTQNTTDVDDPLLERAQAIGVDWRELADREIELFRTDMEALRILPPRDYVAVTEVIDDIAEVIVRLMERGATYRIGDDVYFSVAAAPKFGAISGYDEETMRRLFAERGGDPGRAGKRNPLDWLLWRGERPGEPSWESPFGRGRPGWHVECTAIALRHLGPGFDVSGGGSDLIFPHHEMGACEGHVATGEWPFARAYVHAGMVAYEGEKMSKSRGNLVFVSELRHEADPMAIRLALLARHYRSDWEWTPDRLTEAEARLARWRAAVARPAGPDGAALLARVRERIADDLDAPGALALIDAWAAADGDDASAPGLVRDMVDALLGVAL.

Cys-43 is a binding site for Zn(2+). Residues 43–46 (CGIT), Thr-58, and 81–83 (NTT) each bind L-cysteinyl-5'-AMP. A 'HIGH' region motif is present at residues 45–55 (ITPYDATHLGH). A 'ERGGDP' region motif is present at residues 183 to 188 (ERGGDP). Trp-223 is a binding site for L-cysteinyl-5'-AMP. Cys-227 serves as a coordination point for Zn(2+). 245–247 (GSD) serves as a coordination point for L-cysteinyl-5'-AMP. His-252 provides a ligand contact to Zn(2+). Val-279 is an L-cysteinyl-5'-AMP binding site. The short motif at 285-289 (KMSKS) is the 'KMSKS' region element.

It belongs to the class-I aminoacyl-tRNA synthetase family. MshC subfamily. Monomer. It depends on Zn(2+) as a cofactor.

The enzyme catalyses 1D-myo-inositol 2-amino-2-deoxy-alpha-D-glucopyranoside + L-cysteine + ATP = 1D-myo-inositol 2-(L-cysteinylamino)-2-deoxy-alpha-D-glucopyranoside + AMP + diphosphate + H(+). Catalyzes the ATP-dependent condensation of GlcN-Ins and L-cysteine to form L-Cys-GlcN-Ins. The polypeptide is L-cysteine:1D-myo-inositol 2-amino-2-deoxy-alpha-D-glucopyranoside ligase (Thermobispora bispora (strain ATCC 19993 / DSM 43833 / CBS 139.67 / JCM 10125 / KCTC 9307 / NBRC 14880 / R51)).